We begin with the raw amino-acid sequence, 471 residues long: UDP-glycosyltransferase CGT (471 aa).

Histidine 24 (proton acceptor) is an active-site residue. Histidine 24 is a binding site for an anthocyanidin. Aspartate 120 serves as the catalytic Charge relay. A UDP-alpha-D-glucose-binding site is contributed by threonine 143. The tract at residues 280–281 (SR) is UDP. UDP-alpha-D-glucose-binding residues include valine 343, glutamine 345, histidine 360, tryptophan 363, asparagine 364, serine 365, and glutamate 368. Glycine 383 is a binding site for an anthocyanidin. Aspartate 384 and glutamine 385 together coordinate UDP-alpha-D-glucose.

It belongs to the UDP-glycosyltransferase family.

It carries out the reaction a 3'-hydro-2'-hydroxy-beta-oxodihydrochalcone + UDP-alpha-D-glucose = a 3'-(beta-D-glucopyranosyl)-2'-hydroxy-beta-oxodihydrochalcone + UDP + H(+). Its function is as follows. UDP-glucose-dependent glucosyltransferase catalyzing the c-glucosylation of 2-hydroxyflavanones. Acts preferentially on the dibenzoylmethane tautomers formed in equilibrium with 2-hydroxyflavanones. No activity with naringenin or naringenin chalcone. In Oryza sativa subsp. indica (Rice), this protein is UDP-glycosyltransferase CGT.